A 211-amino-acid chain; its full sequence is Uracil phosphoribosyltransferase (211 aa).

Residues Arg-78, Arg-103, and 130 to 138 (DPMLATGSS) each bind 5-phospho-alpha-D-ribose 1-diphosphate. Residues Ile-193 and 198–200 (GDA) each bind uracil. Asp-199 contacts 5-phospho-alpha-D-ribose 1-diphosphate.

Belongs to the UPRTase family. It depends on Mg(2+) as a cofactor.

It catalyses the reaction UMP + diphosphate = 5-phospho-alpha-D-ribose 1-diphosphate + uracil. It functions in the pathway pyrimidine metabolism; UMP biosynthesis via salvage pathway; UMP from uracil: step 1/1. With respect to regulation, allosterically activated by GTP. Its function is as follows. Catalyzes the conversion of uracil and 5-phospho-alpha-D-ribose 1-diphosphate (PRPP) to UMP and diphosphate. This is Uracil phosphoribosyltransferase from Acinetobacter baylyi (strain ATCC 33305 / BD413 / ADP1).